We begin with the raw amino-acid sequence, 594 residues long: Probable ABC transporter-binding protein DR_1571 (594 aa).

An N-terminal signal peptide occupies residues 1–18 (MKKVMMLALALGASTSLA).

It belongs to the bacterial solute-binding protein 5 family.

Functionally, probably part of a binding-protein-dependent transport system. This Deinococcus radiodurans (strain ATCC 13939 / DSM 20539 / JCM 16871 / CCUG 27074 / LMG 4051 / NBRC 15346 / NCIMB 9279 / VKM B-1422 / R1) protein is Probable ABC transporter-binding protein DR_1571.